The primary structure comprises 530 residues: Probable 1,4-beta-D-glucan cellobiohydrolase B (530 aa).

The first 26 residues, 1–26, serve as a signal peptide directing secretion; it reads MLASTFSYRMYKTALILAALLGSGQA. Positions 27 to 461 are catalytic; sequence QQVGTSQAEV…SNIKVGPIGS (435 aa). The active-site Nucleophile is glutamate 238. The active-site Proton donor is the glutamate 243. Asparagine 296 is a glycosylation site (N-linked (GlcNAc...) asparagine). Residues 462–492 are disordered; sequence TFNSGGSNPGGGTTTTAKPTTTTTTAGSPGG. Residues 462-494 are ser/Thr-rich linker; the sequence is TFNSGGSNPGGGTTTTAKPTTTTTTAGSPGGTG. Residues 475–488 are compositionally biased toward low complexity; sequence TTTAKPTTTTTTAG. Residues 494–530 enclose the CBM1 domain; sequence GVAQHYGQCGGNGWQGPTTCASPYTCQKLNDFYSQCL. Intrachain disulfides connect cysteine 502–cysteine 519 and cysteine 513–cysteine 529.

Belongs to the glycosyl hydrolase 7 (cellulase C) family.

The protein localises to the secreted. It catalyses the reaction Hydrolysis of (1-&gt;4)-beta-D-glucosidic linkages in cellulose and cellotetraose, releasing cellobiose from the non-reducing ends of the chains.. Functionally, the biological conversion of cellulose to glucose generally requires three types of hydrolytic enzymes: (1) Endoglucanases which cut internal beta-1,4-glucosidic bonds; (2) Exocellobiohydrolases that cut the disaccharide cellobiose from the non-reducing end of the cellulose polymer chain; (3) Beta-1,4-glucosidases which hydrolyze the cellobiose and other short cello-oligosaccharides to glucose. The chain is Probable 1,4-beta-D-glucan cellobiohydrolase B (cbhB) from Neosartorya fischeri (strain ATCC 1020 / DSM 3700 / CBS 544.65 / FGSC A1164 / JCM 1740 / NRRL 181 / WB 181) (Aspergillus fischerianus).